The chain runs to 694 residues: Glycine--tRNA ligase beta subunit (694 aa).

This sequence belongs to the class-II aminoacyl-tRNA synthetase family. Tetramer of two alpha and two beta subunits.

The protein resides in the cytoplasm. It catalyses the reaction tRNA(Gly) + glycine + ATP = glycyl-tRNA(Gly) + AMP + diphosphate. This Lactiplantibacillus plantarum (strain ATCC BAA-793 / NCIMB 8826 / WCFS1) (Lactobacillus plantarum) protein is Glycine--tRNA ligase beta subunit.